The primary structure comprises 578 residues: Arginine--tRNA ligase (578 aa).

The 'HIGH' region signature appears at 127–137 (PNLAKEMHVGH).

The protein belongs to the class-I aminoacyl-tRNA synthetase family. As to quaternary structure, monomer.

The protein localises to the cytoplasm. The catalysed reaction is tRNA(Arg) + L-arginine + ATP = L-arginyl-tRNA(Arg) + AMP + diphosphate. The protein is Arginine--tRNA ligase of Pseudomonas putida (strain GB-1).